A 252-amino-acid polypeptide reads, in one-letter code: Mitochondrial cardiolipin hydrolase (252 aa).

Residues 1–4 (MGRL) are Mitochondrial intermembrane-facing. Residues 1 to 39 (MGRLSWQVAAAAAVGLALTLEALPWVLRWLRSRRRRPRR) form a required for mitochondrial localization region. Residues 5 to 27 (SWQVAAAAAVGLALTLEALPWVL) form a helical membrane-spanning segment. Topologically, residues 28–252 (RWLRSRRRRP…TCGTSSESQT (225 aa)) are cytoplasmic. The segment at 45–78 (PSQVTCTEALLRAPGAELAELPEGCPCGLPHGES) adopts a C3H1-type; atypical zinc-finger fold. One can recognise a PLD phosphodiesterase domain in the interval 151-178 (DPGYMHHKFAIVDKRVLITGSLNWTTQA). Catalysis depends on residues His156, Lys158, and Asp163.

It belongs to the phospholipase D family. MitoPLD/Zucchini subfamily. Homodimer. Interacts with MOV10L1. Interacts with MIGA1 and MIGA2; possibly facilitating homodimer formation. Interacts with GK2. As to expression, predominantly expressed in testis and ovary, but not limited to gonads (at protein level). It is also found in brain, heart, pituitary gland, prostate, pancreas, thyroid, bone marrow, lung and muscle.

The protein resides in the mitochondrion outer membrane. Its subcellular location is the golgi apparatus. It carries out the reaction a cardiolipin + H2O = a 1,2-diacyl-sn-glycero-3-phospho-(1'-sn-glycerol) + a 1,2-diacyl-sn-glycero-3-phosphate + H(+). MYC stimulates its phospholipase activity. MIGA1 and MIGA2 increase PLD6 self-association affinity and affects the homodimer conformation facilitating its phospholipase activity over the nuclease activity. Single stranded DNA (ssDNA) hydrolase activity does not depend upon, but is stimulated by the presence of Ca(2+) and Mn(2+). Functionally, presents phospholipase and nuclease activities, depending on the different physiological conditions. Interaction with Mitoguardin (MIGA1 or MIGA2) affects the dimer conformation, facilitating the lipase activity over the nuclease activity. Plays a key role in mitochondrial fusion and fission via its phospholipase activity. In its phospholipase role, it uses the mitochondrial lipid cardiolipin as substrate to generate phosphatidate (PA or 1,2-diacyl-sn-glycero-3-phosphate), a second messenger signaling lipid. Production of PA facilitates Mitofusin-mediated fusion, whereas the cleavage of PA by the Lipin family of phosphatases produces diacylgycerol (DAG) which promotes mitochondrial fission. Both Lipin and DAG regulate mitochondrial dynamics and membrane fusion/fission, important processes for adapting mitochondrial metabolism to changes in cell physiology. Mitochondrial fusion enables cells to cope with the increased nucleotide demand during DNA synthesis. Mitochondrial function and dynamics are closely associated with biological processes such as cell growth, proliferation, and differentiation. Mediator of MYC activity, promotes mitochondrial fusion and activates AMPK which in turn inhibits YAP/TAZ, thereby inducing cell growth and proliferation. The endonuclease activity plays a critical role in PIWI-interacting RNA (piRNA) biogenesis during spermatogenesis. Implicated in spermatogenesis and sperm fertility in testicular germ cells, its single strand-specific nuclease activity is critical for the biogenesis/maturation of PIWI-interacting RNA (piRNA). MOV10L1 selectively binds to piRNA precursors and funnels them to the endonuclease that catalyzes the first cleavage step of piRNA processing to generate piRNA intermediate fragments that are subsequently loaded to Piwi proteins. Cleaves either DNA or RNA substrates with similar affinity, producing a 5' phosphate end, in this way it participates in the processing of primary piRNA transcripts. piRNAs provide essential protection against the activity of mobile genetic elements. piRNA-mediated transposon silencing is thus critical for maintaining genome stability, in particular in germline cells when transposons are mobilized as a consequence of wide-spread genomic demethylation. PA may act as signaling molecule in the recognition/transport of the precursor RNAs of primary piRNAs. Interacts with tesmin in testes, suggesting a role in spermatogenesis via association with its interacting partner. This Homo sapiens (Human) protein is Mitochondrial cardiolipin hydrolase (PLD6).